The following is an 89-amino-acid chain: uncharacterized protein (89 aa).

Transmembrane regions (helical) follow at residues 1 to 21 (MFLA…ISLI) and 28 to 48 (GISL…TIAA).

The protein resides in the cell membrane. This is an uncharacterized protein from Methanocaldococcus jannaschii (strain ATCC 43067 / DSM 2661 / JAL-1 / JCM 10045 / NBRC 100440) (Methanococcus jannaschii).